Consider the following 253-residue polypeptide: Sulfate transporter CysZ (253 aa).

Helical transmembrane passes span 27-47, 71-91, 150-170, and 211-231; these read FVLL…YLAV, ILWP…FTVV, LFIL…WLLF, and IVYV…AAVA.

This sequence belongs to the CysZ family.

The protein localises to the cell inner membrane. Functionally, high affinity, high specificity proton-dependent sulfate transporter, which mediates sulfate uptake. Provides the sulfur source for the cysteine synthesis pathway. The chain is Sulfate transporter CysZ from Pseudomonas syringae pv. tomato (strain ATCC BAA-871 / DC3000).